The following is a 336-amino-acid chain: Anthranilate phosphoribosyltransferase (336 aa).

Residues Gly-82, 85-86, Thr-90, 92-95, 110-118, and Ser-122 contribute to the 5-phospho-alpha-D-ribose 1-diphosphate site; these read GD, NIST, and KHGNRSVSS. Residue Gly-82 coordinates anthranilate. Mg(2+) is bound at residue Ser-94. Asn-113 provides a ligand contact to anthranilate. Anthranilate is bound at residue Arg-168. 2 residues coordinate Mg(2+): Asp-227 and Glu-228.

Belongs to the anthranilate phosphoribosyltransferase family. In terms of assembly, homodimer. The cofactor is Mg(2+).

It catalyses the reaction N-(5-phospho-beta-D-ribosyl)anthranilate + diphosphate = 5-phospho-alpha-D-ribose 1-diphosphate + anthranilate. The protein operates within amino-acid biosynthesis; L-tryptophan biosynthesis; L-tryptophan from chorismate: step 2/5. Functionally, catalyzes the transfer of the phosphoribosyl group of 5-phosphorylribose-1-pyrophosphate (PRPP) to anthranilate to yield N-(5'-phosphoribosyl)-anthranilate (PRA). The chain is Anthranilate phosphoribosyltransferase from Leptospira interrogans serogroup Icterohaemorrhagiae serovar Lai (strain 56601).